The primary structure comprises 38 residues: Large ribosomal subunit protein bL36 (38 aa).

The protein belongs to the bacterial ribosomal protein bL36 family.

The protein is Large ribosomal subunit protein bL36 of Chlorobium limicola (strain DSM 245 / NBRC 103803 / 6330).